Here is a 219-residue protein sequence, read N- to C-terminus: ATP-dependent dethiobiotin synthetase BioD (219 aa).

Position 12 to 17 (12 to 17) interacts with ATP; the sequence is DLGKTH. Threonine 16 provides a ligand contact to Mg(2+). Lysine 37 is a catalytic residue. Serine 41 contributes to the substrate binding site. Residues aspartate 52, 115 to 118, and 175 to 176 contribute to the ATP site; these read EGAG and SE. Mg(2+) contacts are provided by aspartate 52 and glutamate 115.

It belongs to the dethiobiotin synthetase family. As to quaternary structure, homodimer. Requires Mg(2+) as cofactor.

It localises to the cytoplasm. It carries out the reaction (7R,8S)-7,8-diammoniononanoate + CO2 + ATP = (4R,5S)-dethiobiotin + ADP + phosphate + 3 H(+). The protein operates within cofactor biosynthesis; biotin biosynthesis; biotin from 7,8-diaminononanoate: step 1/2. Its function is as follows. Catalyzes a mechanistically unusual reaction, the ATP-dependent insertion of CO2 between the N7 and N8 nitrogen atoms of 7,8-diaminopelargonic acid (DAPA, also called 7,8-diammoniononanoate) to form a ureido ring. The protein is ATP-dependent dethiobiotin synthetase BioD of Caulobacter vibrioides (strain ATCC 19089 / CIP 103742 / CB 15) (Caulobacter crescentus).